We begin with the raw amino-acid sequence, 191 residues long: uncharacterized protein (191 aa).

Residues 52–112 (NKQENQTESS…TNKDTNIETN (61 aa)) form a disordered region. Polar residues predominate over residues 57–70 (QTESSDLNNTDSLV). Low complexity predominate over residues 71-94 (DSNSDNQTNTTDTSTNNVENLNEN). The stretch at 138–172 (QDKISDTERIRFLEEKVSKLERKIRTLSLQMTKIS) forms a coiled coil.

This is an uncharacterized protein from Acanthamoeba polyphaga mimivirus (APMV).